The sequence spans 144 residues: Arsenate reductase ArsI1 (144 aa).

Catalysis depends on cysteine 14, which acts as the Nucleophile; cysteine thioarsenate intermediate.

This sequence belongs to the ArsC family.

The catalysed reaction is [glutaredoxin]-dithiol + arsenate + glutathione + H(+) = glutathionyl-S-S-[glutaredoxin] + arsenite + H2O. Functionally, catalyzes the reduction of arsenate [As(V)] to arsenite [As(III)]. Does not constitute the major arsenate reductase in cells: essential only in the absence of ArsC (AC P74313). The chain is Arsenate reductase ArsI1 from Synechocystis sp. (strain ATCC 27184 / PCC 6803 / Kazusa).